A 372-amino-acid chain; its full sequence is O-methyltransferase bfoE (372 aa).

S-adenosyl-L-methionine is bound at residue W186. The active-site Proton acceptor is H285.

This sequence belongs to the class I-like SAM-binding methyltransferase superfamily. Cation-independent O-methyltransferase family.

The protein operates within secondary metabolite biosynthesis. In terms of biological role, cytochrome P450 monooxygenase; part of the gene cluster that mediates the biosynthesis of bifonsecin B, a dimeric gamma-naphthopyrone. The first step in the biosynthesis of bifonsecin B is the production of gamma-naphthopyrone precursor YWA1 by the non-reducing polyketide synthase albA, via condensation of one acetyl-CoA starter unit with 6 malonyl-CoA units. YWA1 is then methylated by bfoE at position C-6 to yield foncesin which is further methylated at position C-8 by bfoD to produce fonsecin B. A key enzyme in the biosynthetic pathway is the cytochrome P450 monooxygenase bfoB which catalyzes the oxidative dimerization of fonsecin B to bifonsecin B. Bfob also catalyzes the oxidative dimerization of rubrofusarin B into nigerone. The stereoselectivity of bfoB is influenced by the two natural monomeric substrates; homodimerization of fonsecin B yields a stereochemically pure biaryl, M-foncerine B, while rubrofusarin B yields a mixture of enantiomers M- and P-nigerone. This chain is O-methyltransferase bfoE, found in Aspergillus brasiliensis (strain CBS 101740 / IMI 381727 / IBT 21946).